The primary structure comprises 278 residues: Sulfur carrier protein FdhD (278 aa).

Residue C121 is the Cysteine persulfide intermediate of the active site. F260–R265 lines the Mo-bis(molybdopterin guanine dinucleotide) pocket.

The protein belongs to the FdhD family.

Its subcellular location is the cytoplasm. Its function is as follows. Required for formate dehydrogenase (FDH) activity. Acts as a sulfur carrier protein that transfers sulfur from IscS to the molybdenum cofactor prior to its insertion into FDH. In Salmonella choleraesuis (strain SC-B67), this protein is Sulfur carrier protein FdhD.